The chain runs to 513 residues: Lysine--tRNA ligase (513 aa).

Mg(2+)-binding residues include glutamate 422 and glutamate 429.

It belongs to the class-II aminoacyl-tRNA synthetase family. As to quaternary structure, homodimer. The cofactor is Mg(2+).

It is found in the cytoplasm. It carries out the reaction tRNA(Lys) + L-lysine + ATP = L-lysyl-tRNA(Lys) + AMP + diphosphate. This chain is Lysine--tRNA ligase, found in Tolumonas auensis (strain DSM 9187 / NBRC 110442 / TA 4).